Consider the following 150-residue polypeptide: Ribonuclease K6 (150 aa).

Positions Met1 to Ala23 are cleaved as a signal peptide. His38 serves as the catalytic Proton acceptor. 4 cysteine pairs are disulfide-bonded: Cys46–Cys104, Cys60–Cys114, Cys78–Cys129, and Cys85–Cys92. N-linked (GlcNAc...) asparagine glycosylation is present at Asn55. Substrate contacts are provided by residues Lys61–Thr65 and Lys86. N-linked (GlcNAc...) asparagine glycosylation is present at Asn100. Arg105 is a substrate binding site. The active-site Proton donor is His145.

This sequence belongs to the pancreatic ribonuclease family. Interacts (via N-terminus) with bacterial lipopolysaccharide (LPS). Highly expressed in spleen (at protein level). Has little or no expression in healthy kidneys (at protein level). Detected in interstitial leukocytes in infected kidneys (at protein level). Expressed in ureter where it localizes to urothelial and submucosal leukocytes (at protein level). Strong expression in lung and thymus, and lower expression in heart, placenta, pancreas, liver, brain and skeletal muscle. Also expressed in monocytes and neutrophils.

The protein resides in the secreted. Its subcellular location is the lysosome. It is found in the cytoplasmic granule. In terms of biological role, ribonuclease which shows a preference for the pyrimidines uridine and cytosine. Has potent antibacterial activity against a range of Gram-positive and Gram-negative bacteria, including P.aeruginosa, A.baumanii, M.luteus, S.aureus, E.faecalis, E.faecium, S.saprophyticus and E.coli. Causes loss of bacterial membrane integrity, and also promotes agglutination of Gram-negative bacteria. Probably contributes to urinary tract sterility. Bactericidal activity is independent of RNase activity. In Homo sapiens (Human), this protein is Ribonuclease K6 (RNASE6).